Reading from the N-terminus, the 266-residue chain is HLA class II histocompatibility antigen, DR beta 5 chain (266 aa).

Residues Met-1–Ala-29 form the signal peptide. The segment at Gly-30–Val-124 is beta-1. The Extracellular segment spans residues Gly-30–Lys-227. Cystine bridges form between Cys-44–Cys-108 and Cys-146–Cys-202. An N-linked (GlcNAc...) asparagine glycan is attached at Asn-48. Residues Glu-125–Lys-227 are beta-2. The Ig-like C1-type domain occupies Pro-126–Thr-214. A helical membrane pass occupies residues Met-228–Ile-248. Topologically, residues Tyr-249 to Ser-266 are cytoplasmic.

The protein belongs to the MHC class II family. As to quaternary structure, heterodimer of an alpha and a beta subunit; also referred as MHC class II molecule. In the endoplasmic reticulum (ER) it forms a heterononamer; 3 MHC class II molecules bind to a CD74 homotrimer (also known as invariant chain or HLA class II histocompatibility antigen gamma chain). In the endosomal/lysosomal system; CD74 undergoes sequential degradation by various proteases; leaving a small fragment termed CLIP on each MHC class II molecule. MHC class II molecule interacts with HLA_DM, and HLA_DO in B-cells, in order to release CLIP and facilitate the binding of antigenic peptides. Ubiquitinated by MARCH1 and MARCH8 at Lys-254 leading to down-regulation of MHC class II.

The protein resides in the cell membrane. Its subcellular location is the endoplasmic reticulum membrane. It localises to the golgi apparatus. The protein localises to the trans-Golgi network membrane. It is found in the endosome membrane. The protein resides in the lysosome membrane. Its subcellular location is the late endosome membrane. Functionally, binds peptides derived from antigens that access the endocytic route of antigen presenting cells (APC) and presents them on the cell surface for recognition by the CD4 T-cells. The peptide binding cleft accommodates peptides of 10-30 residues. The peptides presented by MHC class II molecules are generated mostly by degradation of proteins that access the endocytic route, where they are processed by lysosomal proteases and other hydrolases. Exogenous antigens that have been endocytosed by the APC are thus readily available for presentation via MHC II molecules, and for this reason this antigen presentation pathway is usually referred to as exogenous. As membrane proteins on their way to degradation in lysosomes as part of their normal turn-over are also contained in the endosomal/lysosomal compartments, exogenous antigens must compete with those derived from endogenous components. Autophagy is also a source of endogenous peptides, autophagosomes constitutively fuse with MHC class II loading compartments. In addition to APCs, other cells of the gastrointestinal tract, such as epithelial cells, express MHC class II molecules and CD74 and act as APCs, which is an unusual trait of the GI tract. To produce a MHC class II molecule that presents an antigen, three MHC class II molecules (heterodimers of an alpha and a beta chain) associate with a CD74 trimer in the ER to form a heterononamer. Soon after the entry of this complex into the endosomal/lysosomal system where antigen processing occurs, CD74 undergoes a sequential degradation by various proteases, including CTSS and CTSL, leaving a small fragment termed CLIP (class-II-associated invariant chain peptide). The removal of CLIP is facilitated by HLA-DM via direct binding to the alpha-beta-CLIP complex so that CLIP is released. HLA-DM stabilizes MHC class II molecules until primary high affinity antigenic peptides are bound. The MHC II molecule bound to a peptide is then transported to the cell membrane surface. In B-cells, the interaction between HLA-DM and MHC class II molecules is regulated by HLA-DO. Primary dendritic cells (DCs) also to express HLA-DO. Lysosomal microenvironment has been implicated in the regulation of antigen loading into MHC II molecules, increased acidification produces increased proteolysis and efficient peptide loading. This is HLA class II histocompatibility antigen, DR beta 5 chain from Homo sapiens (Human).